Consider the following 334-residue polypeptide: MKVVFFGTPQFAVPSLERLLEHSDIDVVAVVTQPDKPRGRGKQLIPSPIKKVALDHQIPIWQPKRVKKNAQTLTKLRETNADAFAVVAYGQILSAEILQMPKLACINVHGSILPKYRGAAPIQWSIYHGETQTGITTMLMDEGMDTGAMLLKAYTPIQLLDNADKIATTLANQGADLLIETLLKLEQGELNPESQNSELATYAPLIQKEDYLINWTRHALQIHNQVRGFYPNCFTTFREQPLKILATAPLGEAYWEHLPSNIAQKIQPQWTTLSSLTSSPGEVVNLIKNLGPIVQTGEGLLLLLQVQLSGKRPQSGWDFVNGTRLSVGEKFLMV.

Residue 111-114 coordinates (6S)-5,6,7,8-tetrahydrofolate; that stretch reads SILP.

Belongs to the Fmt family.

It catalyses the reaction L-methionyl-tRNA(fMet) + (6R)-10-formyltetrahydrofolate = N-formyl-L-methionyl-tRNA(fMet) + (6S)-5,6,7,8-tetrahydrofolate + H(+). In terms of biological role, attaches a formyl group to the free amino group of methionyl-tRNA(fMet). The formyl group appears to play a dual role in the initiator identity of N-formylmethionyl-tRNA by promoting its recognition by IF2 and preventing the misappropriation of this tRNA by the elongation apparatus. In Gloeothece citriformis (strain PCC 7424) (Cyanothece sp. (strain PCC 7424)), this protein is Methionyl-tRNA formyltransferase.